Here is a 394-residue protein sequence, read N- to C-terminus: Mannosyl-3-phosphoglycerate synthase (394 aa).

The protein belongs to the glycosyltransferase 2 family. Mg(2+) serves as cofactor.

The protein localises to the cytoplasm. The enzyme catalyses (2R)-3-phosphoglycerate + GDP-alpha-D-mannose = 2-O-(alpha-D-mannosyl)-3-phosphoglycerate + GDP + H(+). The protein operates within carbohydrate biosynthesis; 2-(alpha-D-mannosyl)-D-glycerate biosynthesis; 2-(alpha-D-mannosyl)-D-glycerate from GDP-alpha-D-mannose (MPG route): step 1/2. Functionally, transfers a mannosyl group from GDP-mannose to phosphoglycerate to form mannosyl-3-phosphoglycerate (MPG). The enzyme is absolutely specific for GDP-mannose and 3-phosphoglycerate, and transfers the mannosyl group with retention of configuration. This chain is Mannosyl-3-phosphoglycerate synthase (mngA), found in Pyrococcus horikoshii (strain ATCC 700860 / DSM 12428 / JCM 9974 / NBRC 100139 / OT-3).